The primary structure comprises 349 residues: Phosphate acyltransferase (349 aa).

It belongs to the PlsX family. In terms of assembly, homodimer. Probably interacts with PlsY.

The protein localises to the cytoplasm. It carries out the reaction a fatty acyl-[ACP] + phosphate = an acyl phosphate + holo-[ACP]. Its pathway is lipid metabolism; phospholipid metabolism. Its function is as follows. Catalyzes the reversible formation of acyl-phosphate (acyl-PO(4)) from acyl-[acyl-carrier-protein] (acyl-ACP). This enzyme utilizes acyl-ACP as fatty acyl donor, but not acyl-CoA. In Rhodopseudomonas palustris (strain BisA53), this protein is Phosphate acyltransferase.